A 449-amino-acid polypeptide reads, in one-letter code: MADTVLNSAPSKAAPRISFVSLGCPKALVDSERIVTRLRAEGYELTKTHQGADLVVVNTCGFLDSAKAESLNAIGEALAENGKVVVTGCMGAEPEQIREVHPSVLAITGPQQYESVLAAVHEAVPPAHDPFLDLVPAEGVKLTPRHYAYLKISEGCSNRCTFCIIPKLRGDLVSRPAGDVLREAERLVKAGVKELLVISQDTSAYGVDLRYATSPWGDKEVAARFLDLAGALGDLGAWVRLHYVYPYPHVDAVMELMAAGKVLPYLDIPFQHASPTVLKRMKRPASQEKTLARIQAWRAAVPDLTLRSTFIVGFPGETEAEFEELLGFLEEAEIDRAGCFKFEPVRGADANALENPVPDAVKAERYDRFMRTQQKVSARRLKRKVGTRQSVIIDTVTPDGGIGRTKGDAPEIDGTVKVFARRPLRVGEIATVKIEAAGPYDLSGTAVGF.

Positions 15-125 constitute an MTTase N-terminal domain; that stretch reads PRISFVSLGC…VLAAVHEAVP (111 aa). [4Fe-4S] cluster contacts are provided by C24, C60, C89, C156, C160, and C163. The Radical SAM core domain occupies 142 to 379; that stretch reads LTPRHYAYLK…MRTQQKVSAR (238 aa). Residues 382-448 enclose the TRAM domain; sequence KRKVGTRQSV…PYDLSGTAVG (67 aa).

Belongs to the methylthiotransferase family. RimO subfamily. It depends on [4Fe-4S] cluster as a cofactor.

The protein localises to the cytoplasm. The enzyme catalyses L-aspartate(89)-[ribosomal protein uS12]-hydrogen + (sulfur carrier)-SH + AH2 + 2 S-adenosyl-L-methionine = 3-methylsulfanyl-L-aspartate(89)-[ribosomal protein uS12]-hydrogen + (sulfur carrier)-H + 5'-deoxyadenosine + L-methionine + A + S-adenosyl-L-homocysteine + 2 H(+). In terms of biological role, catalyzes the methylthiolation of an aspartic acid residue of ribosomal protein uS12. This Xanthobacter autotrophicus (strain ATCC BAA-1158 / Py2) protein is Ribosomal protein uS12 methylthiotransferase RimO.